Here is a 475-residue protein sequence, read N- to C-terminus: tRNA-2-methylthio-N(6)-dimethylallyladenosine synthase (475 aa).

In terms of domain architecture, MTTase N-terminal spans 2 to 119 (AKLHITTWGC…LPEMINKIRG (118 aa)). Positions 11, 48, 82, 156, 160, and 163 each coordinate [4Fe-4S] cluster. The 233-residue stretch at 142–374 (RAEGPTAFVS…QQRINHQAMQ (233 aa)) folds into the Radical SAM core domain. A TRAM domain is found at 377 to 440 (RAMLGTEQRV…TNSLRGDVVR (64 aa)).

This sequence belongs to the methylthiotransferase family. MiaB subfamily. As to quaternary structure, monomer. It depends on [4Fe-4S] cluster as a cofactor.

The protein resides in the cytoplasm. The catalysed reaction is N(6)-dimethylallyladenosine(37) in tRNA + (sulfur carrier)-SH + AH2 + 2 S-adenosyl-L-methionine = 2-methylsulfanyl-N(6)-dimethylallyladenosine(37) in tRNA + (sulfur carrier)-H + 5'-deoxyadenosine + L-methionine + A + S-adenosyl-L-homocysteine + 2 H(+). Functionally, catalyzes the methylthiolation of N6-(dimethylallyl)adenosine (i(6)A), leading to the formation of 2-methylthio-N6-(dimethylallyl)adenosine (ms(2)i(6)A) at position 37 in tRNAs that read codons beginning with uridine. The sequence is that of tRNA-2-methylthio-N(6)-dimethylallyladenosine synthase from Actinobacillus pleuropneumoniae serotype 5b (strain L20).